Here is a 220-residue protein sequence, read N- to C-terminus: Ribose-5-phosphate isomerase A (220 aa).

Substrate is bound by residues 28–31 (TGST), 81–84 (DGAD), and 94–97 (KGGG). The Proton acceptor role is filled by E103. K121 contributes to the substrate binding site.

Belongs to the ribose 5-phosphate isomerase family. As to quaternary structure, homodimer.

It carries out the reaction aldehydo-D-ribose 5-phosphate = D-ribulose 5-phosphate. It participates in carbohydrate degradation; pentose phosphate pathway; D-ribose 5-phosphate from D-ribulose 5-phosphate (non-oxidative stage): step 1/1. In terms of biological role, catalyzes the reversible conversion of ribose-5-phosphate to ribulose 5-phosphate. This is Ribose-5-phosphate isomerase A from Yersinia enterocolitica serotype O:8 / biotype 1B (strain NCTC 13174 / 8081).